Here is a 546-residue protein sequence, read N- to C-terminus: Probable acyl-activating enzyme 21 (546 aa).

It belongs to the ATP-dependent AMP-binding enzyme family.

May act as an acid--thiol ligase that activates carboxylic acids by forming acyl-CoAs. This Arabidopsis thaliana (Mouse-ear cress) protein is Probable acyl-activating enzyme 21 (AEE21).